Consider the following 646-residue polypeptide: Major capsid protein (646 aa).

This sequence belongs to the NCLDV major capsid protein family. As to quaternary structure, homotrimer. The membrane-bound form, but not the cytosolic one, assembles into large complexes. Interacts with the minor capsid proteins M1249L and p17; these interactions form a rigid zipper structure that stabilizes the capsomers.

It localises to the virion. Its subcellular location is the host endoplasmic reticulum membrane. It is found in the host cytoplasm. The protein localises to the host cytosol. Functionally, capsid protein that self-assembles to form the pseudo-hexameric capsomers of the icosahedral capsid. The capsid is constructed of 2760 pseudo-hexameric capsomers and 12 pentameric capsomers, with a T=277 symmetry, about 200 nm in diameter. The capsid encapsulates the DNA-containing nucleoid, the core shell and the inner membrane. Plays an essential role in virion assembly. Involved in virus attachment to the host cell. This is Major capsid protein from African swine fever virus (isolate Pig/Kenya/KEN-50/1950) (ASFV).